Consider the following 447-residue polypeptide: Maintenance of mitochondrial morphology protein 1 (447 aa).

The Lumenal segment spans residues 1–109; that stretch reads MKSPNETSFT…VFSAWSFAQG (109 aa). A helical transmembrane segment spans residues 110–130; that stretch reads LVIGQLSVIVVLIFFIKFFIF. The Cytoplasmic segment spans residues 131–447; that stretch reads SEGPIKTEGP…DDISMKSTDL (317 aa). Residues 208-421 form the SMP-LTD domain; that stretch reads SPETLDWFNV…EPRFQFIKLP (214 aa).

This sequence belongs to the MMM1 family. In terms of assembly, homodimer. Component of the ER-mitochondria encounter structure (ERMES) or MDM complex, composed of MMM1, MDM10, MDM12 and MDM34. An MMM1 homodimer associates with one molecule of MDM12 on each side in a pairwise head-to-tail manner, and the SMP-LTD domains of MMM1 and MDM12 generate a continuous hydrophobic tunnel for phospholipid trafficking.

The protein localises to the endoplasmic reticulum membrane. In terms of biological role, component of the ERMES/MDM complex, which serves as a molecular tether to connect the endoplasmic reticulum (ER) and mitochondria. Components of this complex are involved in the control of mitochondrial shape and protein biogenesis, and function in nonvesicular lipid trafficking between the ER and mitochondria. The MDM12-MMM1 subcomplex functions in the major beta-barrel assembly pathway that is responsible for biogenesis of all outer membrane beta-barrel proteins, and acts in a late step after the SAM complex. The MDM10-MDM12-MMM1 subcomplex further acts in the TOM40-specific pathway after the action of the MDM12-MMM1 complex. Essential for establishing and maintaining the structure of mitochondria and maintenance of mtDNA nucleoids. The sequence is that of Maintenance of mitochondrial morphology protein 1 from Lachancea thermotolerans (strain ATCC 56472 / CBS 6340 / NRRL Y-8284) (Yeast).